Reading from the N-terminus, the 593-residue chain is BBSome complex member BBS1 (593 aa).

At alanine 2 the chain carries N-acetylalanine.

As to quaternary structure, part of BBSome complex, that contains BBS1, BBS2, BBS4, BBS5, BBS7, BBS8/TTC8, BBS9 and BBIP10. Interacts with the C-terminus of RAB3IP. Interacts with CCDC28B and ALDOB. Interacts with PKD1. As to expression, highly expressed in the kidney. Also found in fetal tissue, testis, retina, adipose tissue, heart, skeletal muscle and pancreas.

The protein localises to the cell projection. The protein resides in the cilium membrane. It localises to the cytoplasm. Its subcellular location is the cytoskeleton. It is found in the microtubule organizing center. The protein localises to the centrosome. The protein resides in the centriolar satellite. Its function is as follows. The BBSome complex is thought to function as a coat complex required for sorting of specific membrane proteins to the primary cilia. The BBSome complex is required for ciliogenesis but is dispensable for centriolar satellite function. This ciliogenic function is mediated in part by the Rab8 GDP/GTP exchange factor, which localizes to the basal body and contacts the BBSome. Rab8(GTP) enters the primary cilium and promotes extension of the ciliary membrane. Firstly the BBSome associates with the ciliary membrane and binds to RAB3IP/Rabin8, the guanosyl exchange factor (GEF) for Rab8 and then the Rab8-GTP localizes to the cilium and promotes docking and fusion of carrier vesicles to the base of the ciliary membrane. The BBSome complex, together with the LTZL1, controls SMO ciliary trafficking and contributes to the sonic hedgehog (SHH) pathway regulation. Required for proper BBSome complex assembly and its ciliary localization. Plays a role in olfactory cilium biogenesis/maintenance and trafficking. The polypeptide is BBSome complex member BBS1 (BBS1) (Homo sapiens (Human)).